A 215-amino-acid polypeptide reads, in one-letter code: Probable transaldolase (215 aa).

The active-site Schiff-base intermediate with substrate is Lys83.

Belongs to the transaldolase family. Type 3B subfamily.

It is found in the cytoplasm. The catalysed reaction is D-sedoheptulose 7-phosphate + D-glyceraldehyde 3-phosphate = D-erythrose 4-phosphate + beta-D-fructose 6-phosphate. It participates in carbohydrate degradation; pentose phosphate pathway; D-glyceraldehyde 3-phosphate and beta-D-fructose 6-phosphate from D-ribose 5-phosphate and D-xylulose 5-phosphate (non-oxidative stage): step 2/3. Transaldolase is important for the balance of metabolites in the pentose-phosphate pathway. The polypeptide is Probable transaldolase (Methanococcus vannielii (strain ATCC 35089 / DSM 1224 / JCM 13029 / OCM 148 / SB)).